The sequence spans 132 residues: Small ribosomal subunit protein uS8 (132 aa).

This sequence belongs to the universal ribosomal protein uS8 family. As to quaternary structure, part of the 30S ribosomal subunit. Contacts proteins S5 and S12.

In terms of biological role, one of the primary rRNA binding proteins, it binds directly to 16S rRNA central domain where it helps coordinate assembly of the platform of the 30S subunit. This is Small ribosomal subunit protein uS8 from Borrelia duttonii (strain Ly).